Consider the following 90-residue polypeptide: Small ribosomal subunit protein bS16 (90 aa).

Belongs to the bacterial ribosomal protein bS16 family.

This is Small ribosomal subunit protein bS16 from Bacillus pumilus (strain SAFR-032).